Consider the following 276-residue polypeptide: Cytoskeleton protein RodZ (276 aa).

The Cytoplasmic segment spans residues 1 to 110; the sequence is MTSMRKKTIG…SSKKKKKKTS (110 aa). The helical; Signal-anchor for type II membrane protein transmembrane segment at 111-131 threads the bilayer; that stretch reads FLPLFYFILFALSILIFVTYY. The Extracellular segment spans residues 132–276; that stretch reads VWNYIQTQPE…GQITVTFTKN (145 aa).

It belongs to the RodZ family. Interacts with MltG and MreC in the elongasome. Interacts with KhpB (also called EloR/Jag).

The protein resides in the cell membrane. In terms of biological role, cytoskeletal protein that is involved in cell-shape control through regulation of the length of the long axis. Probably part of the elongasome which synthesizes peripheral peptidoglycan. The protein is Cytoskeleton protein RodZ of Streptococcus pneumoniae (strain ATCC BAA-255 / R6).